The primary structure comprises 420 residues: Corticotropin-releasing factor receptor 1 (420 aa).

The N-terminal stretch at 1–28 (MVPGPRPALLLLLFLLQAFLLWDSPVAA) is a signal peptide. The Extracellular segment spans residues 29 to 116 (SIQEQYCESL…CQEILSEEKR (88 aa)). Cystine bridges form between Cys-35/Cys-59, Cys-49/Cys-92, and Cys-73/Cys-107. N-linked (GlcNAc...) asparagine glycans are attached at residues Asn-43, Asn-50, Asn-83, Asn-95, and Asn-103. A helical transmembrane segment spans residues 117 to 147 (SKLHYHIAVIINYLGHCVSLGTLLVAFVLFM). Residues 148-154 (RLRSIRC) are Cytoplasmic-facing. Residues 155–179 (LRNIIHWNLITAFILRNATWFVVQL) form a helical membrane-spanning segment. Residues 180–194 (TMNPEVHESNVVWCR) lie on the Extracellular side of the membrane. Cys-193 and Cys-263 form a disulfide bridge. The chain crosses the membrane as a helical span at residues 195–223 (LVTAAYNYFHVTNFFWMFGEGCYLHTAIV). Topologically, residues 224–230 (LTYSTDK) are cytoplasmic. The chain crosses the membrane as a helical span at residues 231–258 (LRKWMFICIGWCIPFPIIVAWAIGKLYY). At 259-274 (DNEKCWFGKRAGVYTD) the chain is on the extracellular side. A helical transmembrane segment spans residues 275–300 (YIYQGPMILVLLINFIFLFNIVRILM). Residues 301–311 (TKLRASTTSET) lie on the Cytoplasmic side of the membrane. Residues 312–336 (IQYRKAVKATLVLLSLLGITYMLFF) traverse the membrane as a helical segment. Residues 337–343 (VNPGEDE) lie on the Extracellular side of the membrane. Residues 344–373 (ISRIVFIYFNSFLESFQGFFVSVFYCFLNS) form a helical membrane-spanning segment. Over 374–420 (EVRSAVRKRWHRWQDKHSIRARVARAMSIPTSPTRVSFHSIKQSSAV) the chain is Cytoplasmic.

Belongs to the G-protein coupled receptor 2 family. In terms of assembly, interacts (via N-terminal extracellular domain) with CRF and UCN.

It localises to the cell membrane. Functionally, G-protein coupled receptor for CRH (corticotropin-releasing factor) and UCN (urocortin). Has high affinity for CRH and UCN. Ligand binding causes a conformation change that triggers signaling via guanine nucleotide-binding proteins (G proteins) and down-stream effectors, such as adenylate cyclase. Promotes the activation of adenylate cyclase, leading to increased intracellular cAMP levels. In Gallus gallus (Chicken), this protein is Corticotropin-releasing factor receptor 1 (CRHR1).